The sequence spans 830 residues: Formin-like protein 14 (830 aa).

The signal sequence occupies residues 1 to 34; sequence MAMAMAMPSSSPPLFFSLLNLMLLLLLLAPYCSA. The segment covering 40 to 59 has biased composition (polar residues); sequence NNTHHRSSSPTQTTLQQLHS. Positions 40–195 are disordered; sequence NNTHHRSSSP…NISTLVHPTQ (156 aa). Pro residues-rich tracts occupy residues 61–86 and 95–135; these read DSPPPPPLPTPTVTTPTPPPPPPAPR and PPPP…PTPK. Residues 149–160 show a composition bias toward low complexity; that stretch reads YPFTNYPFFPNF. The helical transmembrane segment at 203 to 223 threads the bilayer; that stretch reads VLQALLLSFLSLCLLLLSALL. Residues 235–446 form a disordered region; sequence HHSHSHPNAR…LHSDKLKPGS (212 aa). The span at 314–323 shows a compositional bias: pro residues; sequence RPLPPLPRVG. The segment covering 324-369 has biased composition (low complexity); it reads PPSGEFASRSSASDPSTAPPAAAEASSSSLSPSSPSASSPTLGSSP. Positions 390–823 constitute an FH2 domain; it reads PKRRPQPPEP…MMGRDWNMAA (434 aa). Residues 424-446 are compositionally biased toward basic and acidic residues; that stretch reads HSPSEKSMRKSRPLHSDKLKPGS.

Belongs to the formin-like family. Class-I subfamily.

The protein localises to the membrane. This Oryza sativa subsp. japonica (Rice) protein is Formin-like protein 14 (FH14).